Consider the following 323-residue polypeptide: Ubiquinone biosynthesis protein COQ4, mitochondrial (323 aa).

Residues histidine 205, aspartate 206, histidine 209, and glutamate 221 each coordinate Zn(2+).

The protein belongs to the COQ4 family. As to quaternary structure, component of a multi-subunit COQ enzyme complex, composed of at least COQ3, COQ4, COQ5, COQ6, COQ7 and COQ9. The cofactor is Zn(2+).

It is found in the mitochondrion inner membrane. It catalyses the reaction a 4-hydroxy-3-methoxy-5-(all-trans-polyprenyl)benzoate + H(+) = a 2-methoxy-6-(all-trans-polyprenyl)phenol + CO2. Its pathway is cofactor biosynthesis; ubiquinone biosynthesis. Its function is as follows. Lyase that catalyzes the C1-decarboxylation of 4-hydroxy-3-methoxy-5-(all-trans-polyprenyl)benzoic acid into 2-methoxy-6-(all-trans-polyprenyl)phenol during ubiquinone biosynthesis. In Candida albicans (strain SC5314 / ATCC MYA-2876) (Yeast), this protein is Ubiquinone biosynthesis protein COQ4, mitochondrial.